The primary structure comprises 312 residues: 2-phospho-L-lactate transferase (312 aa).

2 residues coordinate 7,8-didemethyl-8-hydroxy-5-deazariboflavin: Asp-50 and Lys-89.

The protein belongs to the CofD family. Homodimer. The cofactor is Mg(2+).

It catalyses the reaction (2S)-lactyl-2-diphospho-5'-guanosine + 7,8-didemethyl-8-hydroxy-5-deazariboflavin = oxidized coenzyme F420-0 + GMP + H(+). The protein operates within cofactor biosynthesis; coenzyme F420 biosynthesis. Catalyzes the transfer of the 2-phospholactate moiety from (2S)-lactyl-2-diphospho-5'-guanosine to 7,8-didemethyl-8-hydroxy-5-deazariboflavin (FO) with the formation of oxidized coenzyme F420-0 and GMP. This Methanococcus vannielii (strain ATCC 35089 / DSM 1224 / JCM 13029 / OCM 148 / SB) protein is 2-phospho-L-lactate transferase.